The chain runs to 424 residues: Gamma-glutamyl phosphate reductase (424 aa).

A disordered region spans residues 1 to 27 (MSVEAQSRSGAVDTQEPADLREQVHSA).

This sequence belongs to the gamma-glutamyl phosphate reductase family.

Its subcellular location is the cytoplasm. It carries out the reaction L-glutamate 5-semialdehyde + phosphate + NADP(+) = L-glutamyl 5-phosphate + NADPH + H(+). The protein operates within amino-acid biosynthesis; L-proline biosynthesis; L-glutamate 5-semialdehyde from L-glutamate: step 2/2. Its function is as follows. Catalyzes the NADPH-dependent reduction of L-glutamate 5-phosphate into L-glutamate 5-semialdehyde and phosphate. The product spontaneously undergoes cyclization to form 1-pyrroline-5-carboxylate. In Mycolicibacterium smegmatis (strain ATCC 700084 / mc(2)155) (Mycobacterium smegmatis), this protein is Gamma-glutamyl phosphate reductase.